Here is a 250-residue protein sequence, read N- to C-terminus: Deoxynucleoside kinase (250 aa).

27 to 35 (GNIGSGKTT) is an ATP binding site. Substrate contacts are provided by glutamate 52, tyrosine 70, and glutamine 81. The active-site Proton acceptor is the glutamate 104. Residues arginine 105 and glutamate 172 each contribute to the substrate site. 3 positions are modified to phosphoserine: serine 236, serine 241, and serine 243.

This sequence belongs to the DCK/DGK family. Monomer.

The enzyme catalyses a 2'-deoxyribonucleoside + ATP = a 2'-deoxyribonucleoside 5'-phosphate + ADP + H(+). With respect to regulation, subject to feedback inhibition by dTTP. Deoxyribonucleoside kinase that has a broad specificity phosphorylating thymidine, 2'-deoxyriboadenosine, 2'-deoxyribocytidine and 2'-deoxyriboguanosine. Specificity is higher for pyrimidine nucleosides. Several anti-viral and anti-cancer nucleoside analogs are also efficiently phosphorylated. This Drosophila melanogaster (Fruit fly) protein is Deoxynucleoside kinase (dnk).